Here is a 283-residue protein sequence, read N- to C-terminus: Pantothenate synthetase (283 aa).

34-41 (MGALHDGH) provides a ligand contact to ATP. His-41 serves as the catalytic Proton donor. Residue Gln-65 participates in (R)-pantoate binding. Beta-alanine is bound at residue Gln-65. ATP is bound at residue 152 to 155 (GEKD). A (R)-pantoate-binding site is contributed by Gln-158. ATP is bound by residues Val-181 and 189-192 (MSSR).

Belongs to the pantothenate synthetase family. In terms of assembly, homodimer.

The protein localises to the cytoplasm. The catalysed reaction is (R)-pantoate + beta-alanine + ATP = (R)-pantothenate + AMP + diphosphate + H(+). The protein operates within cofactor biosynthesis; (R)-pantothenate biosynthesis; (R)-pantothenate from (R)-pantoate and beta-alanine: step 1/1. Catalyzes the condensation of pantoate with beta-alanine in an ATP-dependent reaction via a pantoyl-adenylate intermediate. The protein is Pantothenate synthetase of Bradyrhizobium sp. (strain BTAi1 / ATCC BAA-1182).